Here is a 764-residue protein sequence, read N- to C-terminus: E3 ubiquitin-protein ligase CBL-B-B (764 aa).

The span at 1-19 shows a compositional bias: low complexity; it reads MASSSSSSSNSSTSSSALS. The disordered stretch occupies residues 1 to 27; it reads MASSSSSSSNSSTSSSALSGRLPGARS. The tract at residues 48 to 180 is 4H; the sequence is PPKQAAADRR…KAIFPSGQFQ (133 aa). Positions 48-356 constitute a Cbl-PTB domain; sequence PPKQAAADRR…GRSYNPDLTD (309 aa). Residues 181–253 are EF-hand-like; sequence GDTFRITKAD…FEFDIFARLF (73 aa). The Ca(2+) site is built by aspartate 234, threonine 236, asparagine 238, tyrosine 240, and glutamate 245. The segment at 254–356 is SH2-like; it reads QPWSSILRNW…GRSYNPDLTD (103 aa). Arginine 299 is a 4-O-phospho-L-tyrosine binding site. Residues 357–385 form a linker region; that stretch reads LCEPTPHDHIKVTQEQYELYCEMGSTFQL. An RING-type zinc finger spans residues 386-425; sequence CKICAENDKDVKIEPCGHLMCTSCLTSWQESDGQGCPFCR. 2 disordered regions span residues 482-583 and 707-726; these read MNER…SRTC and KVRN…SSHP. Residues 485 to 498 are compositionally biased toward polar residues; it reads RQNSPVTSPGSSPL. Positions 556 to 578 are enriched in pro residues; sequence LPAPPPPLREPPPPPERPPPIPP.

As to quaternary structure, interacts with several SH3 domain-containing proteins and with poly-ubiquitinated proteins.

It is found in the cytoplasm. It catalyses the reaction S-ubiquitinyl-[E2 ubiquitin-conjugating enzyme]-L-cysteine + [acceptor protein]-L-lysine = [E2 ubiquitin-conjugating enzyme]-L-cysteine + N(6)-ubiquitinyl-[acceptor protein]-L-lysine.. It participates in protein modification; protein ubiquitination. Its function is as follows. E3 ubiquitin-protein ligase which accepts ubiquitin from specific E2 ubiquitin-conjugating enzymes, and transfers it to substrates, generally promoting their degradation by the proteasome. The polypeptide is E3 ubiquitin-protein ligase CBL-B-B (cblb-b) (Xenopus laevis (African clawed frog)).